A 156-amino-acid chain; its full sequence is Small ribosomal subunit protein uS7 (156 aa).

This sequence belongs to the universal ribosomal protein uS7 family. Part of the 30S ribosomal subunit. Contacts proteins S9 and S11.

In terms of biological role, one of the primary rRNA binding proteins, it binds directly to 16S rRNA where it nucleates assembly of the head domain of the 30S subunit. Is located at the subunit interface close to the decoding center, probably blocks exit of the E-site tRNA. This Shewanella piezotolerans (strain WP3 / JCM 13877) protein is Small ribosomal subunit protein uS7.